The primary structure comprises 237 residues: 2-C-methyl-D-erythritol 4-phosphate cytidylyltransferase (237 aa).

The protein belongs to the IspD/TarI cytidylyltransferase family. IspD subfamily.

It carries out the reaction 2-C-methyl-D-erythritol 4-phosphate + CTP + H(+) = 4-CDP-2-C-methyl-D-erythritol + diphosphate. The protein operates within isoprenoid biosynthesis; isopentenyl diphosphate biosynthesis via DXP pathway; isopentenyl diphosphate from 1-deoxy-D-xylulose 5-phosphate: step 2/6. In terms of biological role, catalyzes the formation of 4-diphosphocytidyl-2-C-methyl-D-erythritol from CTP and 2-C-methyl-D-erythritol 4-phosphate (MEP). The sequence is that of 2-C-methyl-D-erythritol 4-phosphate cytidylyltransferase from Clostridioides difficile (strain 630) (Peptoclostridium difficile).